We begin with the raw amino-acid sequence, 122 residues long: Small ribosomal subunit protein uS13 (122 aa).

The interval glycine 95–lysine 122 is disordered.

Belongs to the universal ribosomal protein uS13 family. In terms of assembly, part of the 30S ribosomal subunit. Forms a loose heterodimer with protein S19. Forms two bridges to the 50S subunit in the 70S ribosome.

Located at the top of the head of the 30S subunit, it contacts several helices of the 16S rRNA. In the 70S ribosome it contacts the 23S rRNA (bridge B1a) and protein L5 of the 50S subunit (bridge B1b), connecting the 2 subunits; these bridges are implicated in subunit movement. Contacts the tRNAs in the A and P-sites. This chain is Small ribosomal subunit protein uS13, found in Thermoanaerobacter pseudethanolicus (strain ATCC 33223 / 39E) (Clostridium thermohydrosulfuricum).